Here is a 129-residue protein sequence, read N- to C-terminus: Small ribosomal subunit protein uS11 (129 aa).

This sequence belongs to the universal ribosomal protein uS11 family. Part of the 30S ribosomal subunit. Interacts with proteins S7 and S18. Binds to IF-3.

In terms of biological role, located on the platform of the 30S subunit, it bridges several disparate RNA helices of the 16S rRNA. Forms part of the Shine-Dalgarno cleft in the 70S ribosome. In Hydrogenovibrio crunogenus (strain DSM 25203 / XCL-2) (Thiomicrospira crunogena), this protein is Small ribosomal subunit protein uS11.